The primary structure comprises 153 residues: Large ribosomal subunit protein uL13 (153 aa).

The protein belongs to the universal ribosomal protein uL13 family. As to quaternary structure, part of the 50S ribosomal subunit.

Functionally, this protein is one of the early assembly proteins of the 50S ribosomal subunit, although it is not seen to bind rRNA by itself. It is important during the early stages of 50S assembly. The sequence is that of Large ribosomal subunit protein uL13 from Xanthobacter autotrophicus (strain ATCC BAA-1158 / Py2).